Consider the following 521-residue polypeptide: Acidic amino acid decarboxylase GADL1 (521 aa).

Over residues Met1 to Asp12 the composition is skewed to basic and acidic residues. The segment at Met1–Met20 is disordered. Position 333 is an N6-(pyridoxal phosphate)lysine (Lys333).

This sequence belongs to the group II decarboxylase family. As to quaternary structure, homodimer. It depends on pyridoxal 5'-phosphate as a cofactor. Expressed at highest levels in skeletal muscles. Also detected heart, spleen and rumen.

The enzyme catalyses L-aspartate + H(+) = beta-alanine + CO2. It catalyses the reaction 3-sulfino-L-alanine + H(+) = hypotaurine + CO2. The catalysed reaction is L-cysteate + H(+) = taurine + CO2. Its function is as follows. Catalyzes the decarboxylation of L-aspartate, 3-sulfino-L-alanine (cysteine sulfinic acid), and L-cysteate to beta-alanine, hypotaurine and taurine, respectively. The preferred substrate is L-aspartate. Does not exhibit any decarboxylation activity toward glutamate. The protein is Acidic amino acid decarboxylase GADL1 (GADL1) of Bos taurus (Bovine).